We begin with the raw amino-acid sequence, 137 residues long: Holo-[acyl-carrier-protein] synthase (137 aa).

Residues Asp8 and Glu58 each coordinate Mg(2+).

Belongs to the P-Pant transferase superfamily. AcpS family. Mg(2+) serves as cofactor.

The protein localises to the cytoplasm. It carries out the reaction apo-[ACP] + CoA = holo-[ACP] + adenosine 3',5'-bisphosphate + H(+). Its function is as follows. Transfers the 4'-phosphopantetheine moiety from coenzyme A to a Ser of acyl-carrier-protein. The polypeptide is Holo-[acyl-carrier-protein] synthase (Lactobacillus delbrueckii subsp. bulgaricus (strain ATCC 11842 / DSM 20081 / BCRC 10696 / JCM 1002 / NBRC 13953 / NCIMB 11778 / NCTC 12712 / WDCM 00102 / Lb 14)).